A 469-amino-acid chain; its full sequence is Adenosylhomocysteinase (469 aa).

3 residues coordinate substrate: T58, D133, and E195. 196–198 (TTT) is an NAD(+) binding site. K225 and D229 together coordinate substrate. Residues N230, 259–264 (GFGDVG), E282, N317, 338–340 (IGH), and N383 each bind NAD(+).

The protein belongs to the adenosylhomocysteinase family. Requires NAD(+) as cofactor.

It is found in the cytoplasm. It catalyses the reaction S-adenosyl-L-homocysteine + H2O = L-homocysteine + adenosine. It participates in amino-acid biosynthesis; L-homocysteine biosynthesis; L-homocysteine from S-adenosyl-L-homocysteine: step 1/1. Functionally, may play a key role in the regulation of the intracellular concentration of adenosylhomocysteine. The protein is Adenosylhomocysteinase of Rhodopseudomonas palustris (strain TIE-1).